Reading from the N-terminus, the 888-residue chain is Calcium-transporting ATPase 1 (888 aa).

The next 4 helical transmembrane spans lie at 53 to 75 (IFAQ…SAFV), 79 to 97 (ADAS…IGVV), 246 to 266 (VGKY…LIGF), and 283 to 303 (AVAA…AIGV). Residues Val-284, Ala-285, Ile-287, and Glu-289 each coordinate Ca(2+). The active-site 4-aspartylphosphate intermediate is the Asp-331. 6 helical membrane-spanning segments follow: residues 675–695 (ILFL…AILL), 703–723 (PIHI…SLGV), 747–767 (VPFL…AFIA), 791–811 (LLHA…VHSF), 831–851 (LVFS…IPPL), and 865–885 (WGFV…IKLA). Asn-710 and Asp-714 together coordinate Ca(2+).

The protein belongs to the cation transport ATPase (P-type) (TC 3.A.3) family. Type IIA subfamily.

The protein localises to the cell membrane. The catalysed reaction is Ca(2+)(in) + ATP + H2O = Ca(2+)(out) + ADP + phosphate + H(+). With respect to regulation, inhibited by cyclopiazonic acid (CPA). Its function is as follows. Catalyzes the hydrolysis of ATP coupled with the transport of calcium. The sequence is that of Calcium-transporting ATPase 1 from Bacillus cereus (strain ATCC 10987 / NRS 248).